A 172-amino-acid polypeptide reads, in one-letter code: Allergen Bos d 2 (172 aa).

An N-terminal signal peptide occupies residues 1 to 16 (MKAVFLTLLFGLVCTA). Pyrrolidone carboxylic acid is present on Gln17. 2 cysteine pairs are disulfide-bonded: Cys60-Cys64 and Cys79-Cys170.

This sequence belongs to the calycin superfamily. Lipocalin family. Found exclusively in skin. Produced in sweat glands and transported to the skin surface.

The protein localises to the secreted. Its function is as follows. Probable pheromone carrier. This is Allergen Bos d 2 from Bos taurus (Bovine).